The primary structure comprises 301 residues: tRNA dimethylallyltransferase (301 aa).

8-15 (GATGTGKS) provides a ligand contact to ATP. 10–15 (TGTGKS) contacts substrate. The segment at 33–36 (DSMQ) is interaction with substrate tRNA.

Belongs to the IPP transferase family. In terms of assembly, monomer. It depends on Mg(2+) as a cofactor.

The enzyme catalyses adenosine(37) in tRNA + dimethylallyl diphosphate = N(6)-dimethylallyladenosine(37) in tRNA + diphosphate. In terms of biological role, catalyzes the transfer of a dimethylallyl group onto the adenine at position 37 in tRNAs that read codons beginning with uridine, leading to the formation of N6-(dimethylallyl)adenosine (i(6)A). The polypeptide is tRNA dimethylallyltransferase (Tropheryma whipplei (strain Twist) (Whipple's bacillus)).